The sequence spans 208 residues: LexA repressor (208 aa).

The segment at residues 28–48 (RAEIARELGFRSANAAEEHLK) is a DNA-binding region (H-T-H motif). Catalysis depends on for autocatalytic cleavage activity residues Ser125 and Lys162.

It belongs to the peptidase S24 family. As to quaternary structure, homodimer.

It carries out the reaction Hydrolysis of Ala-|-Gly bond in repressor LexA.. In terms of biological role, represses a number of genes involved in the response to DNA damage (SOS response), including recA and lexA. In the presence of single-stranded DNA, RecA interacts with LexA causing an autocatalytic cleavage which disrupts the DNA-binding part of LexA, leading to derepression of the SOS regulon and eventually DNA repair. In Aliivibrio fischeri (strain ATCC 700601 / ES114) (Vibrio fischeri), this protein is LexA repressor.